The chain runs to 442 residues: C4-dicarboxylate transport protein (442 aa).

Helical transmembrane passes span 13 to 33 (VLYF…HFYP), 49 to 69 (GIKM…IAGM), 81 to 101 (LALL…LVVV), 149 to 169 (AFAK…GFAL), 193 to 213 (MIAI…AFTI), 227 to 247 (LMGS…GIIA), 312 to 332 (IYLT…MTLL), 336 to 356 (TLLA…GSGF), and 357 to 377 (IVLA…LAII).

Belongs to the dicarboxylate/amino acid:cation symporter (DAACS) (TC 2.A.23) family.

The protein localises to the cell membrane. Its function is as follows. Responsible for the transport of dicarboxylates such as succinate, fumarate, and malate across the membrane. The polypeptide is C4-dicarboxylate transport protein (Polynucleobacter asymbioticus (strain DSM 18221 / CIP 109841 / QLW-P1DMWA-1) (Polynucleobacter necessarius subsp. asymbioticus)).